We begin with the raw amino-acid sequence, 378 residues long: Alcohol dehydrogenase 1 (378 aa).

Position 48 (C48) interacts with Zn(2+). Position 49 to 53 (H49 to L53) interacts with NAD(+). Residues H69, C99, C102, C105, C113, and C177 each contribute to the Zn(2+) site. NAD(+) is bound by residues G202 to G207, D226, K231, T274 to V276, I297 to A299, and T321 to F323.

This sequence belongs to the zinc-containing alcohol dehydrogenase family. Class-IV subfamily. In terms of assembly, homodimer. Zn(2+) serves as cofactor. As to expression, expressed in flowers and disk florets.

It functions in the pathway isoprenoid biosynthesis. The protein is Alcohol dehydrogenase 1 of Tanacetum cinerariifolium (Dalmatian daisy).